We begin with the raw amino-acid sequence, 481 residues long: Ribosomal protein uS12 methylthiotransferase RimO (481 aa).

The MTTase N-terminal domain occupies Met8–Asp124. 3 residues coordinate [4Fe-4S] cluster: Cys17, Cys53, and Cys87. Residues Pro148 to Ala188 form a disordered region. The region spanning Leu182–Arg413 is the Radical SAM core domain. Residues Cys196, Cys200, and Cys203 each coordinate [4Fe-4S] cluster. The TRAM domain maps to Glu415–Asn480.

The protein belongs to the methylthiotransferase family. RimO subfamily. [4Fe-4S] cluster is required as a cofactor.

The protein resides in the cytoplasm. The enzyme catalyses L-aspartate(89)-[ribosomal protein uS12]-hydrogen + (sulfur carrier)-SH + AH2 + 2 S-adenosyl-L-methionine = 3-methylsulfanyl-L-aspartate(89)-[ribosomal protein uS12]-hydrogen + (sulfur carrier)-H + 5'-deoxyadenosine + L-methionine + A + S-adenosyl-L-homocysteine + 2 H(+). Functionally, catalyzes the methylthiolation of an aspartic acid residue of ribosomal protein uS12. The sequence is that of Ribosomal protein uS12 methylthiotransferase RimO from Cutibacterium acnes (strain DSM 16379 / KPA171202) (Propionibacterium acnes).